The chain runs to 132 residues: Protein NrdI (132 aa).

The protein belongs to the NrdI family.

Its function is as follows. Probably involved in ribonucleotide reductase function. The polypeptide is Protein NrdI (Staphylococcus epidermidis (strain ATCC 35984 / DSM 28319 / BCRC 17069 / CCUG 31568 / BM 3577 / RP62A)).